We begin with the raw amino-acid sequence, 63 residues long: MLCVPVFIILFIIIPFAPTSESQPKTKEEVAKASVHDNAERTLQRLWNQSHCCPIDLQCCPPG.

The first 22 residues, 1-22, serve as a signal peptide directing secretion; it reads MLCVPVFIILFIIIPFAPTSES. Residues 23–50 constitute a propeptide that is removed on maturation; it reads QPKTKEEVAKASVHDNAERTLQRLWNQS. Proline 62 is modified (proline amide).

Belongs to the conotoxin T superfamily. In terms of processing, contains 2 disulfide bonds that can be either 'C1-C3, C2-C4' or 'C1-C4, C2-C3', since these disulfide connectivities have been observed for conotoxins with cysteine framework V (for examples, see AC P0DQQ7 and AC P81755). As to expression, expressed by the venom duct.

It localises to the secreted. This Conus virgo (Virgin cone) protein is Conotoxin Vi5.1b.